The chain runs to 213 residues: ATP synthase peripheral stalk subunit OSCP, mitochondrial (213 aa).

The N-terminal 23 residues, 1–23, are a transit peptide targeting the mitochondrion; that stretch reads MAAPAASGLSRQVRSFSTSVVRP. The SIFI-degron signature appears at 5–23; it reads AASGLSRQVRSFSTSVVRP. N6-acetyllysine occurs at positions 54, 60, 70, and 73. K90 is subject to N6-succinyllysine. K100, K158, and K162 each carry N6-acetyllysine; alternate. N6-succinyllysine; alternate is present on residues K100, K158, and K162. K172, K176, and K192 each carry N6-acetyllysine. N6-succinyllysine is present on K199.

This sequence belongs to the ATPase delta chain family. In terms of assembly, component of the ATP synthase complex composed at least of ATP5F1A/subunit alpha, ATP5F1B/subunit beta, ATP5MC1/subunit c (homooctomer), MT-ATP6/subunit a, MT-ATP8/subunit 8, ATP5ME/subunit e, ATP5MF/subunit f, ATP5MG/subunit g, ATP5MK/subunit k, ATP5MJ/subunit j, ATP5F1C/subunit gamma, ATP5F1D/subunit delta, ATP5F1E/subunit epsilon, ATP5PF/subunit F6, ATP5PB/subunit b, ATP5PD/subunit d, ATP5PO/subunit OSCP. ATP synthase complex consists of a soluble F(1) head domain (subunits alpha(3) and beta(3)) - the catalytic core - and a membrane F(0) domain - the membrane proton channel (subunits c, a, 8, e, f, g, k and j). These two domains are linked by a central stalk (subunits gamma, delta, and epsilon) rotating inside the F1 region and a stationary peripheral stalk (subunits F6, b, d, and OSCP). In terms of processing, acetylation of Lys-70 and Lys-158 is observed in liver mitochondria from fasted mice but not from fed mice. Acetylation at Lys-162 decreases ATP production. Deacetylated by SIRT3. Post-translationally, in response to mitochondrial stress, the precursor protein is ubiquitinated by the SIFI complex in the cytoplasm before mitochondrial import, leading to its degradation. Within the SIFI complex, UBR4 initiates ubiquitin chain that are further elongated or branched by KCMF1.

Its subcellular location is the mitochondrion. It localises to the mitochondrion inner membrane. Its function is as follows. Subunit OSCP, of the mitochondrial membrane ATP synthase complex (F(1)F(0) ATP synthase or Complex V) that produces ATP from ADP in the presence of a proton gradient across the membrane which is generated by electron transport complexes of the respiratory chain. ATP synthase complex consist of a soluble F(1) head domain - the catalytic core - and a membrane F(1) domain - the membrane proton channel. These two domains are linked by a central stalk rotating inside the F(1) region and a stationary peripheral stalk. During catalysis, ATP synthesis in the catalytic domain of F(1) is coupled via a rotary mechanism of the central stalk subunits to proton translocation. In vivo, can only synthesize ATP although its ATP hydrolase activity can be activated artificially in vitro. Part of the complex F(0) domain. Part of the complex F(0) domain and the peripheric stalk, which acts as a stator to hold the catalytic alpha(3)beta(3) subcomplex and subunit a/ATP6 static relative to the rotary elements. The sequence is that of ATP synthase peripheral stalk subunit OSCP, mitochondrial from Mus musculus (Mouse).